A 218-amino-acid polypeptide reads, in one-letter code: Very-long-chain (3R)-3-hydroxyacyl-CoA dehydratase hpo-8 (218 aa).

A run of 5 helical transmembrane segments spans residues 15–35 (ILGW…GLTW), 44–64 (FELK…IVGL), 86–106 (ILHL…LVAW), 137–157 (LFYV…FASL), and 176–196 (MGIS…PGFP). Catalysis depends on residues Tyr142 and Glu149.

It belongs to the very long-chain fatty acids dehydratase HACD family.

It is found in the membrane. It carries out the reaction a very-long-chain (3R)-3-hydroxyacyl-CoA = a very-long-chain (2E)-enoyl-CoA + H2O. It participates in lipid metabolism; fatty acid biosynthesis. Its function is as follows. Catalyzes the third of the four reactions of the long-chain fatty acids elongation cycle. This endoplasmic reticulum-bound enzymatic process, allows the addition of two carbons to the chain of long- and very long-chain fatty acids/VLCFAs per cycle. This enzyme catalyzes the dehydration of the 3-hydroxyacyl-CoA intermediate into trans-2,3-enoyl-CoA, within each cycle of fatty acid elongation. Thereby, it participates in the production of VLCFAs of different chain lengths that are involved in multiple biological processes as precursors of membrane lipids and lipid mediators. The polypeptide is Very-long-chain (3R)-3-hydroxyacyl-CoA dehydratase hpo-8 (hpo-8) (Caenorhabditis elegans).